The primary structure comprises 1456 residues: Putative 1-phosphatidylinositol-3-phosphate 5-kinase FAB1D (1456 aa).

A compositionally biased stretch (low complexity) spans 1 to 19 (MTPSNSLSSSERSLSGECS). Disordered stretches follow at residues 1–110 (MTPS…EVDG), 533–592 (PVSV…NDIE), 925–944 (ENDN…TPLV), 967–987 (VPED…TSPI), 1003–1022 (NGQE…DDEV), and 1137–1159 (NNQD…TNRL). Residues 43–57 (ELTKEVKVDRLERKS) are compositionally biased toward basic and acidic residues. Residues 86 to 110 (REDDSDDVPVWEPPEPENPEDEVDG) show a composition bias toward acidic residues. Over residues 533 to 544 (PVSVDTDVSTTS) the composition is skewed to low complexity. Polar residues predominate over residues 973–987 (SQTLCSSSPDTTSPI). Residues 1115-1443 (NNEESKKPLS…RFRKFMKTHF (329 aa)) form the PIPK domain. Polar residues predominate over residues 1150–1159 (RFSSESTNRL).

In terms of assembly, component of the PI(3,5)P2 regulatory complex at least composed of ATG18, SAC/FIG4, FAB1 and VAC14. It depends on Mg(2+) as a cofactor. Requires Mn(2+) as cofactor.

The enzyme catalyses a 1,2-diacyl-sn-glycero-3-phospho-(1D-myo-inositol-3-phosphate) + ATP = a 1,2-diacyl-sn-glycero-3-phospho-(1D-myo-inositol-3,5-bisphosphate) + ADP + H(+). Its function is as follows. The PI(3,5)P2 regulatory complex regulates both the synthesis and turnover of phosphatidylinositol 3,5-bisphosphate (PtdIns(3,5)P2). Catalyzes the phosphorylation of phosphatidylinositol 3-phosphate on the fifth hydroxyl of the myo-inositol ring, to form phosphatidylinositol 3,5-bisphosphate. In Arabidopsis thaliana (Mouse-ear cress), this protein is Putative 1-phosphatidylinositol-3-phosphate 5-kinase FAB1D (FAB1D).